The chain runs to 524 residues: GMP synthase [glutamine-hydrolyzing] (524 aa).

Residues 8–206 (RILILDFGSQ…IYDICGCEAL (199 aa)) enclose the Glutamine amidotransferase type-1 domain. Cysteine 85 (nucleophile) is an active-site residue. Residues histidine 180 and glutamate 182 contribute to the active site. The 193-residue stretch at 207–399 (WEPRHIIAKS…LGLPFELVYR (193 aa)) folds into the GMPS ATP-PPase domain. Residue 234-240 (SGGVDSS) coordinates ATP.

As to quaternary structure, homodimer.

The catalysed reaction is XMP + L-glutamine + ATP + H2O = GMP + L-glutamate + AMP + diphosphate + 2 H(+). It functions in the pathway purine metabolism; GMP biosynthesis; GMP from XMP (L-Gln route): step 1/1. Its function is as follows. Catalyzes the synthesis of GMP from XMP. This chain is GMP synthase [glutamine-hydrolyzing], found in Nitrosococcus oceani (strain ATCC 19707 / BCRC 17464 / JCM 30415 / NCIMB 11848 / C-107).